We begin with the raw amino-acid sequence, 642 residues long: Threonine--tRNA ligase (642 aa).

One can recognise a TGS domain in the interval M1–T61. Residues D243–P534 are catalytic. Residues C334, H385, and H511 each contribute to the Zn(2+) site.

It belongs to the class-II aminoacyl-tRNA synthetase family. In terms of assembly, homodimer. It depends on Zn(2+) as a cofactor.

It localises to the cytoplasm. The catalysed reaction is tRNA(Thr) + L-threonine + ATP = L-threonyl-tRNA(Thr) + AMP + diphosphate + H(+). Its function is as follows. Catalyzes the attachment of threonine to tRNA(Thr) in a two-step reaction: L-threonine is first activated by ATP to form Thr-AMP and then transferred to the acceptor end of tRNA(Thr). Also edits incorrectly charged L-seryl-tRNA(Thr). In Shewanella sp. (strain W3-18-1), this protein is Threonine--tRNA ligase.